The following is a 280-amino-acid chain: Undecaprenyl-diphosphatase (280 aa).

8 helical membrane passes run Met1–Val21, Phe41–Tyr61, Phe87–Phe107, Leu115–Val135, Ile147–Gly167, Lys186–Leu206, Ile225–Phe245, and Tyr260–Val280.

The protein belongs to the UppP family.

It localises to the cell inner membrane. It catalyses the reaction di-trans,octa-cis-undecaprenyl diphosphate + H2O = di-trans,octa-cis-undecaprenyl phosphate + phosphate + H(+). Functionally, catalyzes the dephosphorylation of undecaprenyl diphosphate (UPP). Confers resistance to bacitracin. The protein is Undecaprenyl-diphosphatase of Porphyromonas gingivalis (strain ATCC 33277 / DSM 20709 / CIP 103683 / JCM 12257 / NCTC 11834 / 2561).